A 1345-amino-acid chain; its full sequence is MASDVTQLLPGIPYRHENQELRVYYADSEFSPAEGRFVFNYTGRAGDLTLLRGRSDAEHLLVVILRNGSGDEDLRPLHAPELRLLHFILAPEVRYSHLDPRSRLEGGGDRSLTFDYGPALYRRVSTDAFELGRVLTLIDCRSLLRVELGRHFVTRLAQYIGEDEMRVVHEALVNDTSVQRWTLGGAAQRGEVPATALTPAAEGGAFVMRDPVSIYLMLPRPDNAMPLGIQASTAASPLVRQYIILTTPGTMSVFPWGSVPKNPSVREAVTHLHSEATSMGQPQLQGQVFQLSLLPFYRVSGAACGVYSVTPSVASGYEDAVHGEIRETHEAHARCLNHSGVPVTCGFLRTFDETSAPLSLNTLVCTSTLATCPVSMLTTSRFMRGQYIVALGDFLPVGGPDAPPYVYRSSSFLCNTIVNTLNMFGKTRARICISGTSRQVGFASTHAHLGSLLPRGGAVLYLSKLPQEALSQIRGRGVSREDLRELVNRFYLRVSSHQVFLVLKDEPVGDQGRQGYQFLQKAAGLNGCAFRVLGRTCDQEGLHFVDDLGEGGGGEVPPRRMGYSPEGAAFSLPFESPVKKTTREYAEGVDVQRGMTLVQEGALEWDMFTPYATVHAVLSHPTVASKEYFVRRVDRFSNGLVRQQQGVGALDLPLADYCLVVDPAVETFTGTSFSREAHEASAPLENISVQEALELADAPERWFDSNGGAAARRPVPGHVLACGEQGYKMINSGVLGGQYGITEVVTNIMLGPAFELAQLQITAAVHWNEGPDYRAQLERAVMACREFCAELGVGLAFSSGCSSAKYGGPSHSPPGPDSLNLISFAGKARVDTSAPRLTPELHGPGHVLIHLSVNREVLVAGSVFEHKMTGLRHPLPPVEAHRVRNMFQCVQALVARGLVTAGHDVSDGGLIACCAEMALAGQCGVTLDIQRGIHPLLVLFSETPGAVLEVPLGNLAGVLEACEPFGCFVNQIGTVEPRTGEGHVVVTQGGSVVFRDSLANVMNSWTSFADEQFSRFGACLKEAEMYRKDYGDNELDAGSLEDACAGGELTLYRSPGRRVGAAVLCLPGCTEPLAALHALVNSGFEVSVVGPEDLASSRDGLGAFAGLVVSGVTGARANYAASRGLVQGLVAERAARETVLVFLNRTGTFSLGLGELGMEFLCAFGVFDGAAAGGGGEGGGEVGRGLTDQSFGNRLIELEANASELPESLWLNFRVPWNTRSVALRHLAGNILPCWAYGTHLGVRYRADGLEYSLDALGMIALHYHGRRAQDWNFARNYPRNPTAVSTVAGLCSRDGRHLGLLCDPSAAYHPWQWQHVPRRVAGLRTSPWAVLFHTLFLDTLKSMS.

The protein resides in the virion tegument. This Equine herpesvirus 2 (strain 86/87) (EHV-2) protein is Probable membrane antigen 75 (75).